Here is a 343-residue protein sequence, read N- to C-terminus: CMP-N-acetylneuraminate-beta-galactosamide-alpha-2,3-sialyltransferase 1 (343 aa).

Residues 1–11 (MAPMRKKSTLK) lie on the Cytoplasmic side of the membrane. A helical; Signal-anchor for type II membrane protein membrane pass occupies residues 12 to 27 (LLTLLVLFIFLTSFFL). N28 is a glycosylation site (N-linked (GlcNAc...) asparagine). At 28-343 (NYSHTVVTTA…INKIRIFKGR (316 aa)) the chain is on the lumenal side. 3 cysteine pairs are disulfide-bonded: C62/C67, C64/C142, and C145/C284. N82 carries N-linked (GlcNAc...) asparagine glycosylation. Q108 is a substrate binding site. An N-linked (GlcNAc...) asparagine glycan is attached at N117. Substrate-binding residues include N150, N173, Y233, Y269, G273, G293, H302, and H319. N-linked (GlcNAc...) asparagine glycosylation occurs at N326.

This sequence belongs to the glycosyltransferase 29 family. The soluble form derives from the membrane form by proteolytic processing. As to expression, the long isoform is abundant in salivary gland, liver, lung, and colon mucosa. Both long and short forms are detected in submaxillary salivary glands.

It is found in the golgi apparatus. The protein resides in the golgi stack membrane. The protein localises to the trans-Golgi network membrane. It localises to the secreted. The catalysed reaction is a beta-D-galactosyl-(1-&gt;3)-N-acetyl-alpha-D-galactosaminyl derivative + CMP-N-acetyl-beta-neuraminate = an N-acetyl-alpha-neuraminyl-(2-&gt;3)-beta-D-galactosyl-(1-&gt;3)-N-acetyl-alpha-D-galactosaminyl derivative + CMP + H(+). It carries out the reaction a ganglioside GM1 (d18:1(4E)) + CMP-N-acetyl-beta-neuraminate = a ganglioside GD1a (d18:1(4E)) + CMP + H(+). It catalyses the reaction ganglioside GM1 (d18:1(4E)/18:0) + CMP-N-acetyl-beta-neuraminate = ganglioside GD1a (18:1(4E)/18:0) + CMP + H(+). The enzyme catalyses a ganglioside GA1 (d18:1(4E)) + CMP-N-acetyl-beta-neuraminate = a ganglioside GM1b (d18:1(4E)) + CMP + H(+). The catalysed reaction is a ganglioside GD1b + CMP-N-acetyl-beta-neuraminate = a ganglioside GT1b + CMP + H(+). It carries out the reaction a 3-O-[beta-D-galactosyl-(1-&gt;3)-N-acetyl-alpha-D-galactosaminyl]-L-threonyl-[protein] + CMP-N-acetyl-beta-neuraminate = a 3-O-[N-acetyl-alpha-neuraminyl-(2-&gt;3)-beta-D-galactosyl-(1-&gt;3)-N-acetyl-alpha-D-galactosaminyl]-L-threonyl-[protein] + CMP + H(+). It catalyses the reaction a 3-O-[beta-D-galactosyl-(1-&gt;3)-N-acetyl-alpha-D-galactosaminyl]-L-seryl-[protein] + CMP-N-acetyl-beta-neuraminate = 3-O-[N-acetyl-alpha-neuraminyl-(2-&gt;3)-beta-D-galactosyl-(1-&gt;3)-N-acetyl-alpha-D-galactosaminyl]-L-seryl-[protein] + CMP + H(+). It participates in protein modification; protein glycosylation. It functions in the pathway glycolipid biosynthesis. In terms of biological role, a beta-galactoside alpha2-&gt;3 sialyltransferase involved in terminal sialylation of glycoproteins and glycolipids. Catalyzes the transfer of sialic acid (N-acetyl-neuraminic acid; Neu5Ac) from the nucleotide sugar donor CMP-Neu5Ac onto acceptor Galbeta-(1-&gt;3)-GalNAc-terminated glycoconjugates through an alpha2-3 linkage. Adds sialic acid to the core 1 O-glycan, Galbeta-(1-&gt;3)-GalNAc-O-Ser/Thr, which is a major structure of mucin-type O-glycans. As part of a homeostatic mechanism that regulates CD8-positive T cell numbers, sialylates core 1 O-glycans of T cell glycoproteins, SPN/CD43 and PTPRC/CD45. Prevents premature apoptosis of thymic CD8-positive T cells prior to peripheral emigration, whereas in the secondary lymphoid organs controls the survival of CD8-positive memory T cells generated following a successful immune response. Transfers sialic acid to asialofetuin, presumably onto Galbeta-(1-&gt;3)-GalNAc-O-Ser. Sialylates GM1a, GA1 and GD1b gangliosides to form GD1a, GM1b and GT1b, respectively. The sequence is that of CMP-N-acetylneuraminate-beta-galactosamide-alpha-2,3-sialyltransferase 1 (ST3GAL1) from Sus scrofa (Pig).